Here is a 198-residue protein sequence, read N- to C-terminus: Recombination protein RecR (198 aa).

The segment at 57 to 72 adopts a C4-type zinc-finger fold; the sequence is CEKCNTFTEAQICEVC. Residues 80-175 form the Toprim domain; sequence TLLCVVETPA…AVTRLARGVP (96 aa).

This sequence belongs to the RecR family.

Functionally, may play a role in DNA repair. It seems to be involved in an RecBC-independent recombinational process of DNA repair. It may act with RecF and RecO. This chain is Recombination protein RecR, found in Paraburkholderia xenovorans (strain LB400).